The chain runs to 262 residues: Acyl-[acyl-carrier-protein]--UDP-N-acetylglucosamine O-acyltransferase (262 aa).

It belongs to the transferase hexapeptide repeat family. LpxA subfamily. Homotrimer.

It localises to the cytoplasm. It catalyses the reaction a (3R)-hydroxyacyl-[ACP] + UDP-N-acetyl-alpha-D-glucosamine = a UDP-3-O-[(3R)-3-hydroxyacyl]-N-acetyl-alpha-D-glucosamine + holo-[ACP]. It participates in glycolipid biosynthesis; lipid IV(A) biosynthesis; lipid IV(A) from (3R)-3-hydroxytetradecanoyl-[acyl-carrier-protein] and UDP-N-acetyl-alpha-D-glucosamine: step 1/6. In terms of biological role, involved in the biosynthesis of lipid A, a phosphorylated glycolipid that anchors the lipopolysaccharide to the outer membrane of the cell. This chain is Acyl-[acyl-carrier-protein]--UDP-N-acetylglucosamine O-acyltransferase, found in Yersinia enterocolitica serotype O:8 / biotype 1B (strain NCTC 13174 / 8081).